We begin with the raw amino-acid sequence, 396 residues long: MLAANERPEAPTAIRIDLGAIFVSLELSRSKWLITSLSPGGGEKMSKHAVAADDIAGLLARFAELKRKARARTGRYFPTIVIQEAGLDGFWIHRVLQAEGIESHVVDPAPIPTSRRRRRAKTDKIDGETLVRALLAYKRGEPRVCAMLRVPTPEEEDRRRISRERKALTNERVRHVNRIKGLLFSQGVSGYQPLRRDRRTRLEELRTGDGRPLPTHLKAQVGRELDRLELLIGQIKAVEVERDAMLAAAPVGSAHFADCEQPAPAMLLALKGIGPEFAAVLWSEGLSRHFDNRRQVAAYAGLAPTPWQSGSVDHDQGVSKAGNPRLRTTLIQGAWLWLRHQPHSALSLWFKQRGKQNDGRLKKKKTIVALACKLLVALWKYVNAGVVIEGAVMKTP.

It belongs to the transposase 20 family.

The polypeptide is Putative transposase y4rJ (Sinorhizobium fredii (strain NBRC 101917 / NGR234)).